A 293-amino-acid polypeptide reads, in one-letter code: Nucleotide-binding protein BCG9842_B5683 (293 aa).

14–21 provides a ligand contact to ATP; the sequence is GMSGAGKT. 65–68 contributes to the GTP binding site; it reads DLRG.

It belongs to the RapZ-like family.

Its function is as follows. Displays ATPase and GTPase activities. The sequence is that of Nucleotide-binding protein BCG9842_B5683 from Bacillus cereus (strain G9842).